The primary structure comprises 431 residues: Adenylosuccinate synthetase (431 aa).

GTP is bound by residues 13–19 (GDEGKGK) and 41–43 (GHT). The active-site Proton acceptor is Asp14. Mg(2+)-binding residues include Asp14 and Gly41. IMP-binding positions include 14–17 (DEGK), 39–42 (NAGH), Thr130, Arg144, Gln225, Thr240, and Arg304. His42 acts as the Proton donor in catalysis. A substrate-binding site is contributed by 300–306 (SVTGRPR). Residues Arg306, 332–334 (KLD), and 414–416 (STG) contribute to the GTP site.

The protein belongs to the adenylosuccinate synthetase family. As to quaternary structure, homodimer. The cofactor is Mg(2+).

The protein localises to the cytoplasm. It catalyses the reaction IMP + L-aspartate + GTP = N(6)-(1,2-dicarboxyethyl)-AMP + GDP + phosphate + 2 H(+). Its pathway is purine metabolism; AMP biosynthesis via de novo pathway; AMP from IMP: step 1/2. Functionally, plays an important role in the de novo pathway of purine nucleotide biosynthesis. Catalyzes the first committed step in the biosynthesis of AMP from IMP. This is Adenylosuccinate synthetase from Bordetella avium (strain 197N).